A 308-amino-acid chain; its full sequence is Putative gluconeogenesis factor (308 aa).

This sequence belongs to the gluconeogenesis factor family.

It localises to the cytoplasm. In terms of biological role, required for morphogenesis under gluconeogenic growth conditions. This Pasteurella multocida (strain Pm70) protein is Putative gluconeogenesis factor.